Here is a 395-residue protein sequence, read N- to C-terminus: uncharacterized protein (395 aa).

Positions 182–238 (KKLEDILSTIAEIEDSIELEKILSLDQFLKSKLSNIKITNNQIDEAKAEFKEMFNKK) form a coiled coil.

This is an uncharacterized protein from Acanthamoeba polyphaga (Amoeba).